A 141-amino-acid polypeptide reads, in one-letter code: Nucleoside diphosphate kinase (141 aa).

ATP contacts are provided by lysine 11, phenylalanine 59, arginine 87, threonine 93, arginine 104, and asparagine 114. Histidine 117 functions as the Pros-phosphohistidine intermediate in the catalytic mechanism.

It belongs to the NDK family. As to quaternary structure, homotetramer. Mg(2+) serves as cofactor.

The protein resides in the cytoplasm. The catalysed reaction is a 2'-deoxyribonucleoside 5'-diphosphate + ATP = a 2'-deoxyribonucleoside 5'-triphosphate + ADP. It carries out the reaction a ribonucleoside 5'-diphosphate + ATP = a ribonucleoside 5'-triphosphate + ADP. Major role in the synthesis of nucleoside triphosphates other than ATP. The ATP gamma phosphate is transferred to the NDP beta phosphate via a ping-pong mechanism, using a phosphorylated active-site intermediate. The polypeptide is Nucleoside diphosphate kinase (Histophilus somni (strain 129Pt) (Haemophilus somnus)).